The following is a 203-amino-acid chain: Guanylate kinase (203 aa).

The region spanning 3–181 is the Guanylate kinase-like domain; the sequence is GTLYIVAAPS…AVAEMCAIFT (179 aa). Residue 10 to 17 coordinates ATP; it reads APSGAGKS.

The protein belongs to the guanylate kinase family.

The protein resides in the cytoplasm. The enzyme catalyses GMP + ATP = GDP + ADP. Functionally, essential for recycling GMP and indirectly, cGMP. This is Guanylate kinase from Xanthomonas euvesicatoria pv. vesicatoria (strain 85-10) (Xanthomonas campestris pv. vesicatoria).